A 541-amino-acid polypeptide reads, in one-letter code: Chaperonin GroEL 2 (541 aa).

ATP is bound by residues 29-32 (TLGP), 86-90 (DGTTT), Gly-413, 476-478 (NAA), and Asp-492.

The protein belongs to the chaperonin (HSP60) family. In terms of assembly, forms a cylinder of 14 subunits composed of two heptameric rings stacked back-to-back. Interacts with the co-chaperonin GroES.

Its subcellular location is the cytoplasm. The catalysed reaction is ATP + H2O + a folded polypeptide = ADP + phosphate + an unfolded polypeptide.. In terms of biological role, together with its co-chaperonin GroES, plays an essential role in assisting protein folding. The GroEL-GroES system forms a nano-cage that allows encapsulation of the non-native substrate proteins and provides a physical environment optimized to promote and accelerate protein folding. The chain is Chaperonin GroEL 2 from Streptomyces coelicolor (strain ATCC BAA-471 / A3(2) / M145).